The primary structure comprises 34 residues: Potassium channel toxin (34 aa).

Intrachain disulfides connect C6/C25, C11/C29, and C15/C31.

It belongs to the short scorpion toxin superfamily. Potassium channel inhibitor family. Alpha-KTx 21 subfamily. Expressed by the venom gland.

The protein resides in the secreted. Toxin that blocks voltage-gated potassium channels (Kv). This is Potassium channel toxin from Tityus metuendus (Scorpion).